The primary structure comprises 2068 residues: Lipoxygenase homology domain-containing protein 1 (2068 aa).

15 consecutive PLAT domains span residues 43–160 (KVYE…RDLL), 172–287 (NKYE…RDIL), 296–412 (ITYI…RQLY), 425–540 (YPWS…REMT), 553–673 (ARYR…RELL), 684–803 (FRYH…VELY), 814–934 (VHYE…RELL), 970–1088 (TTFS…RDLF), 1101–1226 (VPYE…RELV), 1255–1373 (VLYS…RLFY), 1422–1540 (IPYY…RVFD), 1553–1668 (VLYE…CEIC), 1680–1798 (TSYT…RDFA), 1811–1932 (TTYE…VFEV), and 1949–2065 (VKYE…RELF).

Expressed in the inner ear, specifically in hair cells. Higher expression is detected in the cochlea.

The protein resides in the cell projection. Its subcellular location is the stereocilium. Required for normal function of hair cells in the inner ear. The sequence is that of Lipoxygenase homology domain-containing protein 1 (Loxhd1) from Mus musculus (Mouse).